The chain runs to 481 residues: O-phosphoseryl-tRNA(Sec) selenium transferase (481 aa).

Residues 1-36 are tetramerization; it reads MKANFGKKEGEYSRLVSKSSNKLLNSLWEKKQIPEE. Arginine 69 serves as a coordination point for pyridoxal 5'-phosphate. Residues 90 to 100 are phosphate loop (P-loop); the sequence is GRSGNLLEIQP. Substrate is bound by residues arginine 91, serine 92, and glutamine 99. Lysine 277 carries the N6-(pyridoxal phosphate)lysine modification. Arginine 306 provides a ligand contact to substrate.

Belongs to the SepSecS family. In terms of assembly, homotetramer formed by a catalytic dimer and a non-catalytic dimer serving as a binding platform that orients tRNASec for catalysis. Each tetramer binds the CCA ends of two tRNAs which point to the active sites of the catalytic dimer. The cofactor is pyridoxal 5'-phosphate.

Its subcellular location is the cytoplasm. The catalysed reaction is O-phospho-L-seryl-tRNA(Sec) + selenophosphate + H2O = L-selenocysteinyl-tRNA(Sec) + 2 phosphate. The protein operates within aminoacyl-tRNA biosynthesis; selenocysteinyl-tRNA(Sec) biosynthesis; selenocysteinyl-tRNA(Sec) from L-seryl-tRNA(Sec) (archaeal/eukaryal route): step 2/2. Converts O-phosphoseryl-tRNA(Sec) to selenocysteinyl-tRNA(Sec) required for selenoprotein biosynthesis. This chain is O-phosphoseryl-tRNA(Sec) selenium transferase (secs-1), found in Caenorhabditis elegans.